The following is a 533-amino-acid chain: Conglutin beta 2 (533 aa).

The N-terminal stretch at 1–30 (MGKMRVRFPTLVLVLGIVFLMAVSIGIAYG) is a signal peptide. The propeptide occupies 31-108 (EKDVLKSHER…EQQQGSPSYS (78 aa)). Basic and acidic residues-rich tracts occupy residues 37-51 (SHER…EWQP) and 79-99 (SGYE…REQE). 2 disordered regions span residues 37–123 (SHER…QRFQ) and 315–337 (KHAQ…LRSN). Cupin type-1 domains are found at residues 115–273 (YHFS…EEIQ) and 332–494 (FNLR…EDIE). Asn363 and Asn444 each carry an N-linked (GlcNAc...) asparagine glycan. Positions 503–533 (SYFANGQPQQQQQQQSEKEGRRGRRGSSLPF) are disordered.

This sequence belongs to the 7S seed storage protein family. As to quaternary structure, multimers. Give rise to a complex array of processed forms, due to a large number of processing sites and changes in glycosylation.

In terms of biological role, seed storage protein. Accumulates during seed development and is hydrolyzed after germination to provide a carbon and nitrogen source for the developing seedling. Has a lectin-like activity. This chain is Conglutin beta 2, found in Lupinus albus (White lupine).